The following is a 475-amino-acid chain: Sulfate adenylyltransferase subunit 1 (475 aa).

Residues 25 to 239 (KSLLRFLTCG…EVLETVEIQR (215 aa)) enclose the tr-type G domain. The interval 34-41 (GSVDDGKS) is G1. 34–41 (GSVDDGKS) serves as a coordination point for GTP. Residues 92–96 (GITID) are G2. The segment at 113–116 (DTPG) is G3. GTP contacts are provided by residues 113 to 117 (DTPGH) and 168 to 171 (NKMD). A G4 region spans residues 168 to 171 (NKMD). The tract at residues 206-208 (SAL) is G5.

It belongs to the TRAFAC class translation factor GTPase superfamily. Classic translation factor GTPase family. CysN/NodQ subfamily. Heterodimer composed of CysD, the smaller subunit, and CysN.

It catalyses the reaction sulfate + ATP + H(+) = adenosine 5'-phosphosulfate + diphosphate. Its pathway is sulfur metabolism; hydrogen sulfide biosynthesis; sulfite from sulfate: step 1/3. In terms of biological role, with CysD forms the ATP sulfurylase (ATPS) that catalyzes the adenylation of sulfate producing adenosine 5'-phosphosulfate (APS) and diphosphate, the first enzymatic step in sulfur assimilation pathway. APS synthesis involves the formation of a high-energy phosphoric-sulfuric acid anhydride bond driven by GTP hydrolysis by CysN coupled to ATP hydrolysis by CysD. This chain is Sulfate adenylyltransferase subunit 1, found in Shigella flexneri serotype 5b (strain 8401).